The primary structure comprises 1244 residues: MQKAIRLNDGHVVSLGLLAQRDGTRKGYLSKRSSDNPKWQTKWFALLQNLLFYFESDSSSRPSGLYLLEGSICKRMPSPKRGTSSKESDKQHHYFTVNFSNDSQKSLELRTDDSKDCDEWVAAIARASYKILATEHEALMQKYLHLLQVVETEKTVAKQLRQQLEDGEVEIERLKAEIANLIKDNERIQSNQLVAPEDEDSDIKKIKKVQSFLRGWLCRRKWKNIIQDYIRSPHADSMRKRNQVVFSMLEAEAEYVQQLHILVNNFLRPLRMAASSKKPPITHDDVSSIFLNSETIMFLHQIFYQGLKARIASWPTLVLADLFDILLPMLNIYQEFVRNHQYSLQILAHCKQNRDFDKLLKQYEAKPDCEERTLETFLTYPMFQIPRYILTLHELLAHTPHEHVERNSLDYAKSKLEELSRVMHDEVSETENIRKNLAIERMITEGCEILLDTSQTFVRQGSLIQVPMSEKGKINKGRLGSLSLKKEGERQCFLFSKHLIICTRGSGSKLHLTKNGVISLIDCTLLDDPENMDDDGKGQEVDHLDFKIWVEPKDSPPFTVILVASSRQEKAAWTSDIIQCVDNIRCNGLMMNAFEENSKVTVPQMIKSDASLYCDDVDIRFSKTMNSCKVLQIRYASVERLLERLTDLRFLSIDFLNTFLHSYRVFTDAVVVLDKLISIYKKPITAIPARSLELLFSSSHNTKLLYGDAPKSPRASRKFSSPPPLAIGTSSPVRRRKLSLNIPIITGGKALELASLGCPSDGYTNIHSPISPFGKTTLDTSKLCVASSLTRTPEEIDMTTLEESSGFRKPTSDILKEESDDDQSDVDDTEVSPPTPKSFRNRITQEFPLFNYNSGIMMTCRDLMDSNRSPLSATSAFAIATAGANESPANKEIYRRMSLANTGYSSDQRNIDKEFVIRRAATNRVLNVLRHWVTKHSQDFETDDLLKYKVICFLEEVMHDPDLLPQERKAAANIMRTLTQEEITENHSMLDELLLMTEGVKTEPFENHSAMEIAEQLTLLDHLVFKSIPYEEFFGQGWMKADKNERTPYIMKTTRHFNHISNLIASEILRNEEVSARASTIEKWVAVADICRCLHNYNAVLEITSSINRSAIFRLKKTWLKVSKQTKSLFDKLQKLVSSDGRFKNLRETLRNCDPPCVPYLGMYLTDLAFLEEGTPNYTEDGLVNFSKMRMISHIIREIRQFQQTTYKIEPQPKVTQYLVDETFVLDDESLYEASLRIEPKLPT.

Residues 22 to 129 (DGTRKGYLSK…WVAAIARASY (108 aa)) enclose the PH 1 domain. Serine 71 bears the Phosphoserine; by PLK2 mark. The IQ domain maps to 204–229 (KKIKKVQSFLRGWLCRRKWKNIIQDY). The region spanning 240–426 (KRNQVVFSML…EELSRVMHDE (187 aa)) is the DH domain. The PH 2 domain maps to 456–582 (TFVRQGSLIQ…WTSDIIQCVD (127 aa)). Serine 575 and serine 611 each carry phosphoserine; by PLK2. An N-terminal Ras-GEF domain is found at 629 to 743 (KVLQIRYASV…RRRKLSLNIP (115 aa)). Positions 707–730 (GDAPKSPRASRKFSSPPPLAIGTS) are disordered. At serine 739 the chain carries Phosphoserine. 2 positions are modified to phosphoserine; by PLK2: serine 760 and serine 781. The disordered stretch occupies residues 800–840 (TLEESSGFRKPTSDILKEESDDDQSDVDDTEVSPPTPKSFR). The segment covering 818-830 (ESDDDQSDVDDTE) has biased composition (acidic residues). Residue serine 854 is modified to Phosphoserine; by PLK2. The Ras-GEF domain occupies 1009–1241 (SAMEIAEQLT…YEASLRIEPK (233 aa)).

As to quaternary structure, homooligomer and heterooligomer with RASGRF2. Interacts with USP8, thereby regulating its stability. Post-translationally, phosphorylated by PLK2, leading to ubiquitination and degradation by the proteasome. Ubiquitinated and degraded following phosphorylation by PLK2. In terms of processing, phosphorylated by SRC and LCK. Phosphorylation by LCK increases its capacity to stimulate the GDP/GTP exchange on Ras, whereas its phosphorylation by SRC seems not to have an effect on stimulation activity.

Its function is as follows. Promotes the exchange of Ras-bound GDP by GTP. The chain is Ras-specific guanine nucleotide-releasing factor 1 (Rasgrf1) from Rattus norvegicus (Rat).